We begin with the raw amino-acid sequence, 115 residues long: uncharacterized protein (115 aa).

This sequence belongs to the transposase 34 family.

This is an uncharacterized protein from Sinorhizobium fredii (strain NBRC 101917 / NGR234).